The primary structure comprises 382 residues: Chorismate synthase (382 aa).

2 residues coordinate NADP(+): arginine 39 and arginine 45. Residues 128–130 (RAS), 246–247 (QA), alanine 290, 305–309 (KPIAT), and arginine 331 each bind FMN.

Belongs to the chorismate synthase family. In terms of assembly, homotetramer. It depends on FMNH2 as a cofactor.

It catalyses the reaction 5-O-(1-carboxyvinyl)-3-phosphoshikimate = chorismate + phosphate. It functions in the pathway metabolic intermediate biosynthesis; chorismate biosynthesis; chorismate from D-erythrose 4-phosphate and phosphoenolpyruvate: step 7/7. Functionally, catalyzes the anti-1,4-elimination of the C-3 phosphate and the C-6 proR hydrogen from 5-enolpyruvylshikimate-3-phosphate (EPSP) to yield chorismate, which is the branch point compound that serves as the starting substrate for the three terminal pathways of aromatic amino acid biosynthesis. This reaction introduces a second double bond into the aromatic ring system. In Deinococcus geothermalis (strain DSM 11300 / CIP 105573 / AG-3a), this protein is Chorismate synthase.